A 118-amino-acid polypeptide reads, in one-letter code: UPF0342 protein LCK_01004 (118 aa).

This sequence belongs to the UPF0342 family.

The chain is UPF0342 protein LCK_01004 from Leuconostoc citreum (strain KM20).